The following is a 573-amino-acid chain: MVSARIVVLLAVLLCAAAAVASSWEDDNHHHHGGHKSGRCVRRCEDRPWHQRPRCLEQCREEEREKRQERSRHEADDRSGEGSSEDEREREQEKEEKQKDRRPYVFDRRSFRRVVRSEQGSLRVLRPFDEVSRLLRGIRDYRVAVLEANPRSFVVPSHTDAHCIGYVAEGEGVVTTIENGERRSYTIKQGHVFVAPAGAVTYLANTDGRKKLVITKILHTISVPGEFQFFFGPGGRNPESFLSSFSKSIQRAAYKTSSDRLERLFGRHGQDKGIIVRATEEQTRELRRHASEGGHGPHWPLPPFGESRGPYSLLDQRPSIANQHGQLYEADARSFHDLAEHDVSVSFANITAGSMSAPLYNTRSFKIAYVPNGKGYAEIVCPHRQSQGGESERERGKGRRSEEEEESSEEQEEVGQGYHTIRARLSPGTAFVVPAGHPFVAVASRDSNLQIVCFEVHADRNEKVFLAGADNVLQKLDRVAKALSFASKAEEVDEVLGSRREKGFLPGPKESGGHEEREQEEEEREERHGGRGERERHGREEREKEEEEREGRHGRGRREEVAETLLRMVTARM.

The or 21 signal peptide spans 1–18 (MVSARIVVLLAVLLCAAA). Positions 19–86 (AVASSWEDDN…DRSGEGSSED (68 aa)) are excised as a propeptide. The tract at residues 65–102 (EKRQERSRHEADDRSGEGSSEDEREREQEKEEKQKDRR) is disordered. Cupin type-1 domains follow at residues 104–262 (YVFD…DRLE) and 311–493 (YSLL…EEVD). A disordered region spans residues 288–315 (RHASEGGHGPHWPLPPFGESRGPYSLLD). The N-linked (GlcNAc...) asparagine glycan is linked to N349. 2 disordered regions span residues 382–416 (PHRQ…EVGQ) and 498–573 (SRRE…TARM). A compositionally biased stretch (basic and acidic residues) spans 390 to 402 (ESERERGKGRRSE). Residues 403–413 (EEEESSEEQEE) show a composition bias toward acidic residues. Composition is skewed to basic and acidic residues over residues 525-542 (EERH…REER) and 549-561 (REGR…REEV).

The protein belongs to the 7S seed storage protein family. In terms of processing, three protein-processing steps occur in the formation of the mature protein from the primary translation product.

This Zea mays (Maize) protein is Globulin-1 S allele (GLB1).